The sequence spans 1382 residues: Hepatocyte growth factor receptor (1382 aa).

An N-terminal signal peptide occupies residues 1 to 24 (MKAPTALAPGILLLLLTLAQRSHG). The Extracellular portion of the chain corresponds to 25 to 935 (ECKEALVKSE…IVQPDQNFAG (911 aa)). Residues 27 to 516 (KEALVKSEMN…TGKKITKIPL (490 aa)) form the Sema domain. A glycan (N-linked (GlcNAc...) asparagine) is linked at asparagine 45. Intrachain disulfides connect cysteine 95/cysteine 101, cysteine 98/cysteine 160, cysteine 133/cysteine 141, and cysteine 173/cysteine 176. The N-linked (GlcNAc...) asparagine glycan is linked to asparagine 106. Residues asparagine 203 and asparagine 359 are each glycosylated (N-linked (GlcNAc...) asparagine). 2 cysteine pairs are disulfide-bonded: cysteine 299-cysteine 364 and cysteine 386-cysteine 398. 2 N-linked (GlcNAc...) asparagine glycosylation sites follow: asparagine 400 and asparagine 406. 4 disulfides stabilise this stretch: cysteine 521-cysteine 539, cysteine 527-cysteine 562, cysteine 530-cysteine 546, and cysteine 542-cysteine 552. IPT/TIG domains lie at 564-656 (PAVY…FSYV), 658-740 (PVIT…FSYR), and 743-837 (PVVS…LTYV). Residue threonine 583 is glycosylated (O-linked (Man) threonine). N-linked (GlcNAc...) asparagine glycosylation is found at asparagine 608 and asparagine 636. O-linked (Man) threonine glycans are attached at residues threonine 677 and threonine 762. N-linked (GlcNAc...) asparagine glycans are attached at residues asparagine 786 and asparagine 880. A helical membrane pass occupies residues 936–956 (LIIGAVSISVVVLLVSGLFLW). The Cytoplasmic segment spans residues 957 to 1379 (LRKRKHKDLG…LPSQDNIDGE (423 aa)). At serine 967 the chain carries Phosphoserine. Threonine 978 is modified (phosphothreonine). 3 positions are modified to phosphoserine: serine 991, serine 998, and serine 1001. A Phosphotyrosine modification is found at tyrosine 1004. The Protein kinase domain maps to 1079 to 1346 (VHFNEVIGRG…RISSIFSTFI (268 aa)). ATP-binding positions include 1085 to 1093 (IGRGHFGCV) and lysine 1111. Catalysis depends on aspartate 1205, which acts as the Proton acceptor. Residues 1213 to 1382 (LDEKFTVKVA…QDNIDGEANT (170 aa)) form an interaction with RANBP9 region. A Phosphotyrosine modification is found at tyrosine 1231. Tyrosine 1235 and tyrosine 1236 each carry phosphotyrosine; by autocatalysis. A Phosphothreonine modification is found at threonine 1290. The segment at 1321 to 1360 (WHPKAEMRPSVSELVSRISSIFSTFIGEHYVHVNATYVNV) is interaction with MUC20. 2 positions are modified to phosphotyrosine; by autocatalysis: tyrosine 1350 and tyrosine 1357. Tyrosine 1366 carries the post-translational modification Phosphotyrosine.

It belongs to the protein kinase superfamily. Tyr protein kinase family. Heterodimer made of an alpha chain (50 kDa) and a beta chain (145 kDa) which are disulfide linked. Binds PLXNB1. Interacts when phosphorylated with downstream effectors including STAT3, PIK3R1, SRC, PCLG1, GRB2 and GAB1. Interacts with SPSB1, SPSB2 and SPSB4. Interacts with INPP5D/SHIP1. When phosphorylated at Tyr-1357, interacts with INPPL1/SHIP2. Interacts with RANBP9 and RANBP10, as well as SPSB1, SPSB2, SPSB3 and SPSB4. SPSB1 binding occurs in the presence and in the absence of HGF, however HGF treatment has a positive effect on this interaction. Interacts with MUC20; prevents interaction with GRB2 and suppresses hepatocyte growth factor-induced cell proliferation. Interacts with GRB10. Interacts with PTPN1 and PTPN2. Interacts with HSP90AA1 and HSP90AB1; the interaction suppresses MET kinase activity. Interacts with tensin TNS3. Interacts (when phosphorylated) with tensin TNS4 (via SH2 domain); the interaction increases MET protein stability by inhibiting MET endocytosis and subsequent lysosomal degradation. In terms of processing, autophosphorylated in response to ligand binding on Tyr-1235 and Tyr-1236 in the kinase domain leading to further phosphorylation of Tyr-1350 and Tyr-1357 in the C-terminal multifunctional docking site. Dephosphorylated by PTPRJ at Tyr-1350 and Tyr-1366. Dephosphorylated by PTPN1 and PTPN2. Post-translationally, ubiquitinated. Ubiquitination by CBL regulates the receptor stability and activity through proteasomal degradation. O-mannosylation of IPT/TIG domains by TMEM260 is required for protein maturation. O-mannosylated residues are composed of single mannose glycans that are not elongated or modified. In terms of tissue distribution, expressed at highest levels in lung, liver and kidney, also expressed in stomach, intestine, spleen, testis and brain. Not expressed in heart or muscle.

Its subcellular location is the membrane. It carries out the reaction L-tyrosyl-[protein] + ATP = O-phospho-L-tyrosyl-[protein] + ADP + H(+). Its activity is regulated as follows. In its inactive state, the C-terminal tail interacts with the catalytic domain and inhibits the kinase activity. Upon ligand binding, the C-terminal tail is displaced and becomes phosphorylated, thus increasing the kinase activity. Functionally, receptor tyrosine kinase that transduces signals from the extracellular matrix into the cytoplasm by binding to hepatocyte growth factor/HGF ligand. Regulates many physiological processes including proliferation, scattering, morphogenesis and survival. Ligand binding at the cell surface induces autophosphorylation of MET on its intracellular domain that provides docking sites for downstream signaling molecules. Following activation by ligand, interacts with the PI3-kinase subunit PIK3R1, PLCG1, SRC, GRB2, STAT3 or the adapter GAB1. Recruitment of these downstream effectors by MET leads to the activation of several signaling cascades including the RAS-ERK, PI3 kinase-AKT, or PLCgamma-PKC. The RAS-ERK activation is associated with the morphogenetic effects while PI3K/AKT coordinates prosurvival effects. During embryonic development, MET signaling plays a role in gastrulation, development and migration of muscles and neuronal precursors, angiogenesis and kidney formation. In adults, participates in wound healing as well as organ regeneration and tissue remodeling. Also promotes differentiation and proliferation of hematopoietic cells. The protein is Hepatocyte growth factor receptor (Met) of Rattus norvegicus (Rat).